Reading from the N-terminus, the 82-residue chain is Nuclear protein 1 (82 aa).

The segment at 1-82 (MATFPPATSA…SERKKRGARR (82 aa)) is disordered. A compositionally biased stretch (acidic residues) spans 17–28 (PEDEDSSLDESD). A Nuclear localization signal motif is present at residues 65–82 (KLVTKLQNSERKKRGARR).

This sequence belongs to the NUPR family. Monomer. Directly interacts with MSL1 and binds MORF4L1, two components of histone acetyltransferase complex; the interaction with MORF4L1 may be mediated by MSL1. Interacts with EP300; this interaction enhances the effect of EP300 on PAX2 transcription factor activity. Interacts with PAXIP1; this interaction prevents PAXIP1 inhibition of PAX2 transcription factor activity. Interacts with COPS5; this interaction allows COPS5-dependent CDKN1B nuclear to cytoplasm translocation. Interacts with RNF2. Interacts with FOXO3; this interaction represses FOXO3 transactivation. Interacts with PTMA; negatively regulates apoptotic process. Interacts with MYOD1, EP300 and DDX5; this interaction coordinates the association of anti-proliferative and pro-myogenic proteins at the myogenin promoter. Interacts with TP53; interaction is stress-dependent. Forms a complex with EP300 and TP53; this complex binds CDKN1A promoter leading to transcriptional induction of CDKN1A. Post-translationally, phosphorylated in vitro by PKA and CK. Phosphorylation promotes DNA-binding activity. In terms of processing, acetylated by EP300 in vitro. In terms of tissue distribution, widely expressed, with high levels in liver, pancreas, prostate, ovary, colon, thyroid, spinal cord, trachea and adrenal gland, moderate levels in heart, placenta, lung, skeletal muscle, kidney, testis, small intestine, stomach and lymph node, and low levels in brain, spleen, thymus and bone marrow. Not detected in peripheral blood leukocytes.

The protein resides in the nucleus. Its subcellular location is the cytoplasm. The protein localises to the perinuclear region. In terms of biological role, transcription regulator that converts stress signals into a program of gene expression that empowers cells with resistance to the stress induced by a change in their microenvironment. Thereby participates in the regulation of many processes namely cell-cycle, apoptosis, autophagy and DNA repair responses. Controls cell cycle progression and protects cells from genotoxic stress induced by doxorubicin through the complex formation with TP53 and EP300 that binds CDKN1A promoter leading to transcriptional induction of CDKN1A. Protects pancreatic cancer cells from stress-induced cell death by binding the RELB promoter and activating its transcription, leading to IER3 transactivation. Negatively regulates apoptosis through interaction with PTMA. Inhibits autophagy-induced apoptosis in cardiac cells through FOXO3 interaction, inducing cytoplasmic translocation of FOXO3 thereby preventing the FOXO3 association with the pro-autophagic BNIP3 promoter. Inhibits cell growth and facilitates programmed cell death by apoptosis after adriamycin-induced DNA damage through transactivation of TP53. Regulates methamphetamine-induced apoptosis and autophagy through DDIT3-mediated endoplasmic reticulum stress pathway. Participates in DNA repair following gamma-irradiation by facilitating DNA access of the transcription machinery through interaction with MSL1 leading to inhibition of histone H4' Lys-16' acetylation (H4K16ac). Coactivator of PAX2 transcription factor activity, both by recruiting EP300 to increase PAX2 transcription factor activity and by binding PAXIP1 to suppress PAXIP1-induced inhibition on PAX2. Positively regulates cell cycle progression through interaction with COPS5 inducing cytoplasmic translocation of CDKN1B leading to the CDKN1B degradation. Coordinates, through its interaction with EP300, the assiociation of MYOD1, EP300 and DDX5 to the MYOG promoter, leading to inhibition of cell-cycle progression and myogenic differentiation promotion. Negatively regulates beta cell proliferation via inhibition of cell-cycle regulatory genes expression through the suppression of their promoter activities. Also required for LHB expression and ovarian maturation. Exacerbates CNS inflammation and demyelination upon cuprizone treatment. This chain is Nuclear protein 1, found in Homo sapiens (Human).